A 379-amino-acid chain; its full sequence is Putative acetyl-CoA C-acetyltransferase VraB (379 aa).

Cys-86 functions as the Acyl-thioester intermediate in the catalytic mechanism. His-338 serves as the catalytic Proton acceptor.

The protein belongs to the thiolase-like superfamily. Thiolase family.

This Staphylococcus aureus (strain MRSA252) protein is Putative acetyl-CoA C-acetyltransferase VraB (vraB).